A 190-amino-acid chain; its full sequence is CASP-like protein 1E2 (190 aa).

Residues 1-21 form a disordered region; sequence MEHEGKNNMNGMEMEKGKREL. At 1–28 the chain is on the cytoplasmic side; the sequence is MEHEGKNNMNGMEMEKGKRELGSRKGVE. The chain crosses the membrane as a helical span at residues 29–49; the sequence is LTMRVLALILTMAAATVLGVA. Over 50-83 the chain is Extracellular; sequence KQTKVVSIKLIPTLPPLDITTTAKASYLSAFVYN. The helical transmembrane segment at 84–104 threads the bilayer; the sequence is ISVNAIACGYTAISIAILMIS. At 105–111 the chain is on the cytoplasmic side; it reads RGRRSKK. A helical membrane pass occupies residues 112–132; the sequence is LLMVVLLGDLVMVALLFSGTG. The Extracellular segment spans residues 133-163; that stretch reads AASAIGLMGLHGNKHVMWKKVCGVFGKFCHR. Residues 164-184 form a helical membrane-spanning segment; sequence AAPSLPLTLLAAVVFMFLVVL. Residues 185–190 are Cytoplasmic-facing; that stretch reads DAIKLP.

Belongs to the Casparian strip membrane proteins (CASP) family. Homodimer and heterodimers.

It localises to the cell membrane. The protein is CASP-like protein 1E2 of Arabidopsis thaliana (Mouse-ear cress).